The primary structure comprises 476 residues: Nyctalopin (476 aa).

The signal sequence occupies residues 1–18 (MLVLLLHAVVLGLPSAWA). 11 LRR repeats span residues 60–84 (VSID…PSLR), 85–108 (RLSL…PRLA), 110–133 (LRLA…SRLR), 134–157 (RLDL…PALR), 159–181 (LAAF…NLTH), 182–204 (AHLE…RRLR), 205–228 (SLSL…GVLE), 229–252 (HLLL…RRLR), 254–276 (LNLG…AELE), 277–300 (LLYL…SGLL), and 302–324 (LHLN…FFLG). The N-linked (GlcNAc...) asparagine glycan is linked to N92. N178 carries N-linked (GlcNAc...) asparagine glycosylation. A glycan (N-linked (GlcNAc...) asparagine) is linked at N295. The region spanning 336 to 387 (DCRLEWLRDWMEGSGRVTDVPCASPGSVAGLDLSQVTFGRSSDGLCVDPEEL) is the LRRCT domain. 3 N-linked (GlcNAc...) asparagine glycosylation sites follow: N388, N427, and N434.

The protein belongs to the small leucine-rich proteoglycan (SLRP) family. SLRP class IV subfamily. Expressed in kidney and retina. Also at low levels in brain, testis and muscle. Within the retina, expressed in the inner segment of photoreceptors, outer and inner nuclear layers and the ganglion cell layer.

The protein resides in the secreted. The protein localises to the extracellular space. Its subcellular location is the extracellular matrix. This is Nyctalopin (NYX) from Homo sapiens (Human).